The primary structure comprises 384 residues: Methylthioribose-1-phosphate isomerase (384 aa).

Residue Asp255 is the Proton donor of the active site.

This sequence belongs to the eIF-2B alpha/beta/delta subunits family. MtnA subfamily.

Its subcellular location is the cytoplasm. It is found in the nucleus. The catalysed reaction is 5-(methylsulfanyl)-alpha-D-ribose 1-phosphate = 5-(methylsulfanyl)-D-ribulose 1-phosphate. Its pathway is amino-acid biosynthesis; L-methionine biosynthesis via salvage pathway; L-methionine from S-methyl-5-thio-alpha-D-ribose 1-phosphate: step 1/6. Its function is as follows. Catalyzes the interconversion of methylthioribose-1-phosphate (MTR-1-P) into methylthioribulose-1-phosphate (MTRu-1-P). The polypeptide is Methylthioribose-1-phosphate isomerase (mri1) (Talaromyces marneffei (strain ATCC 18224 / CBS 334.59 / QM 7333) (Penicillium marneffei)).